We begin with the raw amino-acid sequence, 240 residues long: Large ribosomal subunit protein uL2 (240 aa).

The interval 200–240 is disordered; sequence HPFGGGGRQHPGKPKSISRNAPPGRKVGDIASKRTGRGGNE.

The protein belongs to the universal ribosomal protein uL2 family. Part of the 50S ribosomal subunit. Forms a bridge to the 30S subunit in the 70S ribosome. Interacts weakly with protein L37Ae.

In terms of biological role, one of the primary rRNA binding proteins. Required for association of the 30S and 50S subunits to form the 70S ribosome, for tRNA binding and peptide bond formation. It has been suggested to have peptidyltransferase activity; this is somewhat controversial. Makes several contacts with the 16S rRNA in the 70S ribosome. The polypeptide is Large ribosomal subunit protein uL2 (rpl2) (Haloarcula marismortui (strain ATCC 43049 / DSM 3752 / JCM 8966 / VKM B-1809) (Halobacterium marismortui)).